The chain runs to 347 residues: tRNA N6-adenosine threonylcarbamoyltransferase (347 aa).

Fe cation-binding residues include H111 and H115. Substrate is bound by residues 133–137 (LASGG), D166, G179, and N278. Residue D306 coordinates Fe cation.

It belongs to the KAE1 / TsaD family. The cofactor is Fe(2+).

It localises to the cytoplasm. The enzyme catalyses L-threonylcarbamoyladenylate + adenosine(37) in tRNA = N(6)-L-threonylcarbamoyladenosine(37) in tRNA + AMP + H(+). In terms of biological role, required for the formation of a threonylcarbamoyl group on adenosine at position 37 (t(6)A37) in tRNAs that read codons beginning with adenine. Is involved in the transfer of the threonylcarbamoyl moiety of threonylcarbamoyl-AMP (TC-AMP) to the N6 group of A37, together with TsaE and TsaB. TsaD likely plays a direct catalytic role in this reaction. This chain is tRNA N6-adenosine threonylcarbamoyltransferase, found in Paramagnetospirillum magneticum (strain ATCC 700264 / AMB-1) (Magnetospirillum magneticum).